A 335-amino-acid chain; its full sequence is Glycerol-3-phosphate dehydrogenase [NAD(P)+] (335 aa).

Residues phenylalanine 11, arginine 31, and lysine 107 each coordinate NADPH. Sn-glycerol 3-phosphate-binding residues include lysine 107 and glycine 135. Residue alanine 139 coordinates NADPH. Sn-glycerol 3-phosphate is bound by residues lysine 190, aspartate 245, serine 255, arginine 256, and asparagine 257. The active-site Proton acceptor is the lysine 190. Residue arginine 256 participates in NADPH binding. NADPH-binding residues include leucine 280 and glutamate 282.

Belongs to the NAD-dependent glycerol-3-phosphate dehydrogenase family.

The protein resides in the cytoplasm. It carries out the reaction sn-glycerol 3-phosphate + NAD(+) = dihydroxyacetone phosphate + NADH + H(+). The catalysed reaction is sn-glycerol 3-phosphate + NADP(+) = dihydroxyacetone phosphate + NADPH + H(+). The protein operates within membrane lipid metabolism; glycerophospholipid metabolism. Functionally, catalyzes the reduction of the glycolytic intermediate dihydroxyacetone phosphate (DHAP) to sn-glycerol 3-phosphate (G3P), the key precursor for phospholipid synthesis. This Anaplasma marginale (strain St. Maries) protein is Glycerol-3-phosphate dehydrogenase [NAD(P)+].